The following is a 901-amino-acid chain: Protein translocase subunit SecA (901 aa).

ATP-binding positions include Gln-87, 105–109, and Asp-512; that span reads GEGKT. Zn(2+)-binding residues include Cys-885, Cys-887, Cys-896, and His-897.

The protein belongs to the SecA family. Monomer and homodimer. Part of the essential Sec protein translocation apparatus which comprises SecA, SecYEG and auxiliary proteins SecDF-YajC and YidC. It depends on Zn(2+) as a cofactor.

The protein localises to the cell inner membrane. Its subcellular location is the cytoplasm. The enzyme catalyses ATP + H2O + cellular proteinSide 1 = ADP + phosphate + cellular proteinSide 2.. Part of the Sec protein translocase complex. Interacts with the SecYEG preprotein conducting channel. Has a central role in coupling the hydrolysis of ATP to the transfer of proteins into and across the cell membrane, serving both as a receptor for the preprotein-SecB complex and as an ATP-driven molecular motor driving the stepwise translocation of polypeptide chains across the membrane. The sequence is that of Protein translocase subunit SecA from Salmonella agona (strain SL483).